The sequence spans 457 residues: DDB1- and CUL4-associated factor 10 (457 aa).

WD repeat units follow at residues 65-104 (RTHG…HIKT), 108-146 (AHED…SKAC), 150-189 (GHTS…EDGC), and 195-234 (FHTR…KSLE). The span at 246–265 (TASTSDMTSTSSETRPSSSP) shows a compositional bias: low complexity. The segment at 246-304 (TASTSDMTSTSSETRPSSSPCHNSDSGPLFEKHMSRSSQREGTSPRNSLEVLTPEVPGE) is disordered. Residues 281–292 (RSSQREGTSPRN) show a composition bias toward polar residues. WD repeat units lie at residues 306–346 (DRGN…QEGT), 368–406 (VGRG…KELV), and 424–457 (SHKD…QPKF).

It belongs to the WD repeat DCAF10 family.

It functions in the pathway protein modification; protein ubiquitination. May function as a substrate receptor for CUL4-DDB1 E3 ubiquitin-protein ligase complex. This chain is DDB1- and CUL4-associated factor 10 (dcaf10), found in Xenopus laevis (African clawed frog).